Here is a 406-residue protein sequence, read N- to C-terminus: Putative colanic acid biosynthesis glycosyltransferase WcaL (406 aa).

Belongs to the glycosyltransferase group 1 family. Glycosyltransferase 4 subfamily.

It participates in slime biogenesis; slime polysaccharide biosynthesis. This is Putative colanic acid biosynthesis glycosyltransferase WcaL (wcaL) from Escherichia coli (strain K12).